A 448-amino-acid chain; its full sequence is Fibulin-5 (448 aa).

An N-terminal signal peptide occupies residues 1 to 23 (MPGFKRILTVTVLALCLPTPGNA). Residues 42–82 (DVDECRTIPEACRGDMMCVNQNGGYLCIPRTNPVYRGPYSN) form the EGF-like 1; calcium-binding domain. 17 disulfide bridges follow: C46–C59, C53–C68, C131–C144, C138–C153, C155–C166, C172–C181, C177–C190, C192–C205, C211–C221, C217–C230, C232–C245, C251–C262, C258–C271, C273–C286, C292–C305, C299–C314, and C320–C332. Positions 54–56 (RGD) match the Cell attachment site motif. The EGF-like 2; calcium-binding domain occupies 127–167 (DVDECATDSHQCNPTQICINTEGGYTCSCTDGYWLLEGQCL). Positions 168–206 (DIDECRYGYCQQLCANVPGSYSCTCNPGFTLNEDGRSCQ) constitute an EGF-like 3; calcium-binding domain. In terms of domain architecture, EGF-like 4; calcium-binding spans 207 to 246 (DVNECATENPCVQTCVNTYGSFICRCDPGYELEDDGVHCS). Residues 245 to 448 (CSDMDECSFS…LRIYVSQYPF (204 aa)) form an interaction with LOXL1 region. Residues 247 to 287 (DMDECSFSEFLCQHECVNQPGTYFCSCPAGYILLDDNRSCQ) enclose the EGF-like 5; calcium-binding domain. 2 N-linked (GlcNAc...) asparagine glycosylation sites follow: N283 and N296. The 46-residue stretch at 288 to 333 (DINECEHRNHTCILQQTCYNLQGGFKCIDPIRCEEPYLRISDNRCM) folds into the EGF-like 6; calcium-binding domain.

It belongs to the fibulin family. Homodimer. Monomer, homodimerizes in presence of Ca(2+). Interacts with ELN. Interacts (via N-terminus) with the integrins ITGAV/ITGB3, ITGAV/ITGB5 and ITGA9/ITGB1. Interacts with FBN1 (via N-terminal domain). Forms a ternary complex with ELN and FBN1. Interacts with EFEMP2 with moderate affinity. Interacts with LOXL1. Post-translationally, N-glycosylated.

It localises to the secreted. The protein localises to the extracellular space. It is found in the extracellular matrix. In terms of biological role, essential for elastic fiber formation, is involved in the assembly of continuous elastin (ELN) polymer and promotes the interaction of microfibrils and ELN. Stabilizes and organizes elastic fibers in the skin, lung and vasculature. Promotes adhesion of endothelial cells through interaction of integrins and the RGD motif. Vascular ligand for integrin receptors which may play a role in vascular development and remodeling. May act as an adapter that mediates the interaction between FBN1 and ELN. This Bos taurus (Bovine) protein is Fibulin-5 (FBLN5).